The chain runs to 496 residues: Signal recognition particle subunit SRP54 1 (496 aa).

Residues 1–296 (MVLAQLGGSI…DVKPFVSRLL (296 aa)) are G-domain. Residues 108–115 (GLQGSGKT), 191–195 (DTSGR), and 249–252 (TKMD) contribute to the GTP site. The segment at 297–496 (GMGDLSGLVN…MGMFGGGGGE (200 aa)) is M-domain.

The protein belongs to the GTP-binding SRP family. SRP54 subfamily. As to quaternary structure, component of a signal recognition particle (SRP) complex that consists of a 7SL RNA molecule of 300 nucleotides and six protein subunits: SRP72, SRP68, SRP54, SRP19, SRP14 and SRP9.

Its subcellular location is the cytoplasm. The protein resides in the endoplasmic reticulum. It carries out the reaction GTP + H2O = GDP + phosphate + H(+). In terms of biological role, component of the signal recognition particle (SRP) complex, a ribonucleoprotein complex that mediates the cotranslational targeting of secretory and membrane proteins to the endoplasmic reticulum (ER). As part of the SRP complex, associates with the SRP receptor (SR) component SRPRA to target secretory proteins to the endoplasmic reticulum membrane. Binds to the signal sequence of presecretory proteins when they emerge from the ribosomes. Displays basal GTPase activity, and stimulates reciprocal GTPase activation of the SR subunit SRPRA. Forms a guanosine 5'-triphosphate (GTP)-dependent complex with the SR subunit SRPRA. SR compaction and GTPase mediated rearrangement of SR drive SRP-mediated cotranslational protein translocation into the ER. Requires the presence of SRP9/SRP14 and/or SRP19 to stably interact with RNA. The polypeptide is Signal recognition particle subunit SRP54 1 (Solanum lycopersicum (Tomato)).